Here is a 298-residue protein sequence, read N- to C-terminus: Ribosomal RNA small subunit methyltransferase H (298 aa).

Residues 37 to 39 (GGH), aspartate 57, leucine 91, aspartate 105, and glutamine 112 contribute to the S-adenosyl-L-methionine site.

This sequence belongs to the methyltransferase superfamily. RsmH family.

It is found in the cytoplasm. The catalysed reaction is cytidine(1402) in 16S rRNA + S-adenosyl-L-methionine = N(4)-methylcytidine(1402) in 16S rRNA + S-adenosyl-L-homocysteine + H(+). In terms of biological role, specifically methylates the N4 position of cytidine in position 1402 (C1402) of 16S rRNA. This chain is Ribosomal RNA small subunit methyltransferase H, found in Kosmotoga olearia (strain ATCC BAA-1733 / DSM 21960 / TBF 19.5.1).